The sequence spans 98 residues: Histone H4-like protein type G (98 aa).

The DNA-binding element occupies 17–21 (KCHRK).

The protein belongs to the histone H4 family. In terms of assembly, the nucleosome is a histone octamer containing two molecules each of H2A, H2B, H3 and H4 assembled in one H3-H4 heterotetramer and two H2A-H2B heterodimers. The octamer wraps approximately 147 bp of DNA.

It localises to the nucleus. It is found in the chromosome. Core component of nucleosome. Nucleosomes wrap and compact DNA into chromatin, limiting DNA accessibility to the cellular machineries which require DNA as a template. Histones thereby play a central role in transcription regulation, DNA repair, DNA replication and chromosomal stability. DNA accessibility is regulated via a complex set of post-translational modifications of histones, also called histone code, and nucleosome remodeling. The chain is Histone H4-like protein type G from Homo sapiens (Human).